We begin with the raw amino-acid sequence, 538 residues long: Thiamine transport system permease protein ThiP (538 aa).

Helical transmembrane passes span V19–L39, L57–L77, L97–Y117, L141–L161, F202–G222, L242–L262, I293–S313, L337–L357, A376–L396, L406–L426, Y466–G486, and A509–T529. Positions I58 to T263 constitute an ABC transmembrane type-1 1 domain. The region spanning L333–H528 is the ABC transmembrane type-1 2 domain.

It belongs to the binding-protein-dependent transport system permease family. CysTW subfamily. In terms of assembly, the complex is composed of two ATP-binding proteins (ThiQ), two transmembrane proteins (ThiP) and a solute-binding protein (ThiB).

The protein localises to the cell inner membrane. In terms of biological role, part of the ABC transporter complex ThiBPQ involved in thiamine import. Probably responsible for the translocation of the substrate across the membrane. This chain is Thiamine transport system permease protein ThiP (thiP), found in Haemophilus influenzae (strain ATCC 51907 / DSM 11121 / KW20 / Rd).